We begin with the raw amino-acid sequence, 140 residues long: uncharacterized protein (140 aa).

This sequence belongs to the SufE family.

This is an uncharacterized protein from Rhizobium meliloti (strain 1021) (Ensifer meliloti).